A 501-amino-acid chain; its full sequence is Probable cytochrome P450 6t3 (501 aa).

Residue Cys-444 participates in heme binding.

It belongs to the cytochrome P450 family. Heme is required as a cofactor.

The protein localises to the endoplasmic reticulum membrane. It localises to the microsome membrane. May be involved in the metabolism of insect hormones and in the breakdown of synthetic insecticides. The polypeptide is Probable cytochrome P450 6t3 (Cyp6t3) (Drosophila melanogaster (Fruit fly)).